The chain runs to 774 residues: Transcription factor MBS1 (774 aa).

Positions 37-143 (EITFYDSGVP…YVPTSVSPPP (107 aa)) constitute an HTH APSES-type domain. The H-T-H motif DNA-binding region spans 68–89 (ATQILKVAGFDKPQRTRVLERE). Disordered stretches follow at residues 135–180 (VPTS…SAAA) and 209–229 (RVSL…VASV). Over residues 155 to 165 (ARRDKEKETGR) the composition is skewed to basic and acidic residues. Over residues 166 to 176 (TKATPSRTGPT) the composition is skewed to polar residues. ANK repeat units lie at residues 348 to 377 (DGHT…SIFA) and 467 to 496 (EGET…NPKI). A disordered region spans residues 752–774 (EEENDNQVYNTSAGESGPSSWVQ). Polar residues predominate over residues 757 to 774 (NQVYNTSAGESGPSSWVQ).

The protein localises to the nucleus. Transcription factor that positively regulates ergosterol biosynthesis and thereby affects polyene and azole drug susceptibility. Plays a role in maintenance of membrane stability and osmotic stress response. Involved in genotoxic and oxidative stress responses. Also promotes production of melanin and capsule and thereby is required for full virulence. This Cryptococcus neoformans var. grubii serotype A (strain H99 / ATCC 208821 / CBS 10515 / FGSC 9487) (Filobasidiella neoformans var. grubii) protein is Transcription factor MBS1.